The primary structure comprises 255 residues: Coenzyme F420:L-glutamate ligase (255 aa).

Residues 11–14 (IPLI), 40–41 (ST), and K45 each bind GTP. Position 109 (D109) interacts with a divalent metal cation. N112 is a binding site for GTP. D150, T151, and E208 together coordinate a divalent metal cation. 206 to 213 (MGEGAGGT) is a GTP binding site.

It belongs to the CofE family. As to quaternary structure, homodimer. Requires Mg(2+) as cofactor. It depends on Mn(2+) as a cofactor. The cofactor is K(+).

It carries out the reaction oxidized coenzyme F420-0 + GTP + L-glutamate = oxidized coenzyme F420-1 + GDP + phosphate + H(+). The catalysed reaction is oxidized coenzyme F420-1 + GTP + L-glutamate = oxidized coenzyme F420-2 + GDP + phosphate + H(+). The protein operates within cofactor biosynthesis; coenzyme F420 biosynthesis. Functionally, catalyzes the GTP-dependent successive addition of two or more gamma-linked L-glutamates to the L-lactyl phosphodiester of 7,8-didemethyl-8-hydroxy-5-deazariboflavin (F420-0) to form coenzyme F420-0-glutamyl-glutamate (F420-2) or polyglutamated F420 derivatives. The sequence is that of Coenzyme F420:L-glutamate ligase from Methanosarcina barkeri (strain Fusaro / DSM 804).